Here is a 242-residue protein sequence, read N- to C-terminus: Phosphoribosylaminoimidazole-succinocarboxamide synthase (242 aa).

The protein belongs to the SAICAR synthetase family.

It carries out the reaction 5-amino-1-(5-phospho-D-ribosyl)imidazole-4-carboxylate + L-aspartate + ATP = (2S)-2-[5-amino-1-(5-phospho-beta-D-ribosyl)imidazole-4-carboxamido]succinate + ADP + phosphate + 2 H(+). It participates in purine metabolism; IMP biosynthesis via de novo pathway; 5-amino-1-(5-phospho-D-ribosyl)imidazole-4-carboxamide from 5-amino-1-(5-phospho-D-ribosyl)imidazole-4-carboxylate: step 1/2. In Pediococcus pentosaceus (strain ATCC 25745 / CCUG 21536 / LMG 10740 / 183-1w), this protein is Phosphoribosylaminoimidazole-succinocarboxamide synthase.